The primary structure comprises 275 residues: Ammonia transport outward protein 3 (275 aa).

Over 1 to 84 (MTSSASSPQD…NCAKYTPHQF (84 aa)) the chain is Extracellular. At S4 the chain carries Phosphoserine. A helical membrane pass occupies residues 85 to 105 (ANPVPLGLASFSLSCLVLSLI). Over 106–120 (NANVRGVTDGKWALS) the chain is Cytoplasmic. The helical transmembrane segment at 121 to 141 (LFMFFGGAIELFAGLLCFVIG) threads the bilayer. Over 142 to 181 (DTYAMTVFSSFGGFWICYGYGLTDTDNLVSGYTDPTMLNN) the chain is Extracellular. A helical membrane pass occupies residues 182 to 202 (VIGFFLAGWTVFTFLMLMCTL). Residues 203-207 (KSTWG) lie on the Cytoplasmic side of the membrane. Residues 208-228 (LFLLLTFLDLTFLLLCIGTFI) traverse the membrane as a helical segment. At 229 to 236 (DNNNLKMA) the chain is on the extracellular side. Residues 237 to 257 (GGYFGILSSCCGWYSLYCSVV) traverse the membrane as a helical segment. The Cytoplasmic segment spans residues 258–275 (SPSNSYLAFRAHTMPNAP).

This sequence belongs to the acetate uptake transporter (AceTr) (TC 2.A.96) family.

Its subcellular location is the cell membrane. Transporter protein required for ammonia export. Induced in rho(0) cells, probably to eliminate the excess ammonia that arises because of a potential defect in ammonia assimilation in those cells. In Saccharomyces cerevisiae (strain ATCC 204508 / S288c) (Baker's yeast), this protein is Ammonia transport outward protein 3 (ATO3).